The following is a 678-amino-acid chain: MAITSVIEQMRQLIQLIAKHNHAYYVMDQPTISDSEYDHLFHQLKALEEQYPELVQADSPTTKVGGQALSKFESVTHVVPMLSLGNVFNQEDLFAFARRVEERLPNQKVQYEVELKLDGLAISLWYENGVLVRGVTRGDGETGEDITQNVKTIRNLPKVLHSEKYEIPRLLEVRGEVLMPKSGFEKLNADQEAKGEKTFANPRNAAAGSLRQLDPNIAAARPLAFYAYGIAQCEPNHGLTTMHDSLQWLTELGFQIAERQYLCNSIQEVQQRYEQIQQERPNLQVEIDGMVVKVDDLKQQQQLGFLSREPRWATAYKFPAQAALTTVEQIDWQVGRTGTLTPVARLNPVFVGGVTVSNVTLHNIGEIHRLDVRIGDTVSVYRTGDVIPKVEKVWPEFRPAEAEVVHLPESCPVCASPVVMPEGEALARCSGGLYCAAQRIEAIRHFVSRKAMDIEGLGDRWVESLLRLDLLKDVADIYHLHEHRETLLGIEKMGEKSVQNLIDAIEASKKTTLARFIYALGIRGVGETTARMLANTFQTLEALKAANVEALKKTPDVGDITAEWIADFFLAPHNIEVLDRLIAAGIHWDAPTAPTRQPLNGESWVLTGTLEQMTRDQATQMLQALGARVSGSVSSKTKCVVAGEKAGSKLEKAAKLGIPVMNETDFLSLMAGYGQTLS.

NAD(+) contacts are provided by residues D34–D38, S83–L84, and E114. The active-site N6-AMP-lysine intermediate is K116. NAD(+) contacts are provided by R137, E176, K293, and K317. 4 residues coordinate Zn(2+): C411, C414, C429, and C435. A BRCT domain is found at P594 to S678.

Belongs to the NAD-dependent DNA ligase family. LigA subfamily. Requires Mg(2+) as cofactor. Mn(2+) is required as a cofactor.

The catalysed reaction is NAD(+) + (deoxyribonucleotide)n-3'-hydroxyl + 5'-phospho-(deoxyribonucleotide)m = (deoxyribonucleotide)n+m + AMP + beta-nicotinamide D-nucleotide.. Its function is as follows. DNA ligase that catalyzes the formation of phosphodiester linkages between 5'-phosphoryl and 3'-hydroxyl groups in double-stranded DNA using NAD as a coenzyme and as the energy source for the reaction. It is essential for DNA replication and repair of damaged DNA. The chain is DNA ligase from Acinetobacter baumannii (strain AB307-0294).